The chain runs to 98 residues: Co-chaperonin GroES (98 aa).

The protein belongs to the GroES chaperonin family. As to quaternary structure, heptamer of 7 subunits arranged in a ring. Interacts with the chaperonin GroEL.

It localises to the cytoplasm. Together with the chaperonin GroEL, plays an essential role in assisting protein folding. The GroEL-GroES system forms a nano-cage that allows encapsulation of the non-native substrate proteins and provides a physical environment optimized to promote and accelerate protein folding. GroES binds to the apical surface of the GroEL ring, thereby capping the opening of the GroEL channel. This is Co-chaperonin GroES from Beutenbergia cavernae (strain ATCC BAA-8 / DSM 12333 / CCUG 43141 / JCM 11478 / NBRC 16432 / NCIMB 13614 / HKI 0122).